A 96-amino-acid polypeptide reads, in one-letter code: 5-hydroxytryptamine receptor 2B (96 aa).

Topologically, residues 1–8 are extracellular; sequence CNQSTLQM. N-linked (GlcNAc...) asparagine glycosylation occurs at Asn2. The chain crosses the membrane as a helical span at residues 9-30; sequence LLEIFVWIGYVSSGVNPLVYTL. Residues 24-28 carry the NPxxY motif; important for ligand-induced conformation changes and signaling motif; that stretch reads NPLVY. Over 31 to 96 the chain is Cytoplasmic; it reads FNKTFRDAFG…STMYQSPVRL (66 aa). Cys45 carries the S-palmitoyl cysteine lipid modification.

The protein belongs to the G-protein coupled receptor 1 family. Interacts (via C-terminus) with MPDZ.

Its subcellular location is the cell membrane. The protein resides in the synapse. It is found in the synaptosome. G-protein coupled receptor for 5-hydroxytryptamine (serotonin). Also functions as a receptor for various ergot alkaloid derivatives and psychoactive substances. Ligand binding causes a conformation change that triggers signaling via guanine nucleotide-binding proteins (G proteins) and modulates the activity of downstream effectors. HTR2B is coupled to G(q)/G(11) G alpha proteins and activates phospholipase C-beta, releasing diacylglycerol (DAG) and inositol 1,4,5-trisphosphate (IP3) second messengers that modulate the activity of phosphatidylinositol 3-kinase and promote the release of Ca(2+) ions from intracellular stores, respectively. Beta-arrestin family members inhibit signaling via G proteins and mediate activation of alternative signaling pathways. Plays a role in the regulation of dopamine and 5-hydroxytryptamine release, 5-hydroxytryptamine uptake and in the regulation of extracellular dopamine and 5-hydroxytryptamine levels, and thereby affects neural activity. May play a role in the perception of pain. Plays a role in the regulation of behavior, including impulsive behavior. Required for normal proliferation of embryonic cardiac myocytes and normal heart development. Protects cardiomyocytes against apoptosis. Plays a role in the adaptation of pulmonary arteries to chronic hypoxia. Plays a role in vasoconstriction. Required for normal osteoblast function and proliferation, and for maintaining normal bone density. Required for normal proliferation of the interstitial cells of Cajal in the intestine. In Cavia porcellus (Guinea pig), this protein is 5-hydroxytryptamine receptor 2B (HTR2B).